The following is a 217-amino-acid chain: Probable transaldolase (217 aa).

The Schiff-base intermediate with substrate role is filled by lysine 85.

Belongs to the transaldolase family. Type 3B subfamily.

Its subcellular location is the cytoplasm. The enzyme catalyses D-sedoheptulose 7-phosphate + D-glyceraldehyde 3-phosphate = D-erythrose 4-phosphate + beta-D-fructose 6-phosphate. It participates in carbohydrate degradation; pentose phosphate pathway; D-glyceraldehyde 3-phosphate and beta-D-fructose 6-phosphate from D-ribose 5-phosphate and D-xylulose 5-phosphate (non-oxidative stage): step 2/3. In terms of biological role, transaldolase is important for the balance of metabolites in the pentose-phosphate pathway. The chain is Probable transaldolase from Agathobacter rectalis (strain ATCC 33656 / DSM 3377 / JCM 17463 / KCTC 5835 / VPI 0990) (Eubacterium rectale).